The primary structure comprises 162 residues: Phosphopantetheine adenylyltransferase (162 aa).

Residue S11 coordinates substrate. ATP is bound by residues 11-12 (SF) and H19. Residues K43, V76, and R90 each contribute to the substrate site. ATP contacts are provided by residues 91–93 (GLR), E101, and 126–132 (HLYISSS).

The protein belongs to the bacterial CoaD family. As to quaternary structure, homohexamer. The cofactor is Mg(2+).

Its subcellular location is the cytoplasm. It catalyses the reaction (R)-4'-phosphopantetheine + ATP + H(+) = 3'-dephospho-CoA + diphosphate. It functions in the pathway cofactor biosynthesis; coenzyme A biosynthesis; CoA from (R)-pantothenate: step 4/5. Reversibly transfers an adenylyl group from ATP to 4'-phosphopantetheine, yielding dephospho-CoA (dPCoA) and pyrophosphate. In Streptococcus pneumoniae (strain Hungary19A-6), this protein is Phosphopantetheine adenylyltransferase.